A 327-amino-acid polypeptide reads, in one-letter code: Cysteine synthase (327 aa).

Position 65 is an N6-(pyridoxal phosphate)lysine (K65). Residues N95, 200–204, and S282 contribute to the pyridoxal 5'-phosphate site; that span reads GTGGT.

The protein belongs to the cysteine synthase/cystathionine beta-synthase family. The cofactor is pyridoxal 5'-phosphate.

The enzyme catalyses O-acetyl-L-serine + hydrogen sulfide = L-cysteine + acetate. The protein operates within amino-acid biosynthesis; L-cysteine biosynthesis; L-cysteine from L-serine: step 2/2. The chain is Cysteine synthase (cysM) from Aquifex aeolicus (strain VF5).